The following is a 265-amino-acid chain: NAD kinase (265 aa).

Asp45 (proton acceptor) is an active-site residue. Residues 45–46 (DG), 122–123 (NE), Arg148, Asp150, 161–166 (TAYSKS), and Ala185 each bind NAD(+).

Belongs to the NAD kinase family. A divalent metal cation serves as cofactor.

It is found in the cytoplasm. It carries out the reaction NAD(+) + ATP = ADP + NADP(+) + H(+). In terms of biological role, involved in the regulation of the intracellular balance of NAD and NADP, and is a key enzyme in the biosynthesis of NADP. Catalyzes specifically the phosphorylation on 2'-hydroxyl of the adenosine moiety of NAD to yield NADP. This is NAD kinase from Lactobacillus delbrueckii subsp. bulgaricus (strain ATCC 11842 / DSM 20081 / BCRC 10696 / JCM 1002 / NBRC 13953 / NCIMB 11778 / NCTC 12712 / WDCM 00102 / Lb 14).